Here is a 293-residue protein sequence, read N- to C-terminus: Hydroxyquinol 1,2-dioxygenase (293 aa).

Tyr-164, Tyr-197, His-221, and His-223 together coordinate Fe cation.

The protein belongs to the intradiol ring-cleavage dioxygenase family. In terms of assembly, homodimer. The cofactor is Fe(3+).

It carries out the reaction benzene-1,2,4-triol + O2 = maleylacetate + 2 H(+). It functions in the pathway aromatic compound metabolism; beta-ketoadipate pathway; 3-oxoadipate from 3,4-dihydroxybenzoate: step 2/4. With respect to regulation, inhibited by 3,5-dichlorocatechol, chlorohydroquinone and 4,5-dibromocatechol. In terms of biological role, catalyzes the ortho-cleavage of the aromatic ring of hydroxyquinol. The chain is Hydroxyquinol 1,2-dioxygenase (chqB) from Nocardioides simplex (Arthrobacter simplex).